We begin with the raw amino-acid sequence, 1249 residues long: AMB antimetabolite synthetase AmbB (1249 aa).

The segment at F245–F633 is adenylation. Positions I716 to P735 are disordered. Residues L734 to A809 form the Carrier domain. An O-(pantetheine 4'-phosphoryl)serine modification is found at S768. Positions G823–G1150 are condensation.

This sequence belongs to the NRP synthetase family. The cofactor is pantetheine 4'-phosphate.

It carries out the reaction holo-[peptidyl-carrier protein] + L-alanine + ATP = L-alanyl-[peptidyl-carrier protein] + AMP + diphosphate. Functionally, involved in the biosynthesis of the antimetabolite L-2-amino-4-methoxy-trans-3-butenoic acid (AMB), a non-proteinogenic amino acid which is toxic for prokaryotes and eukaryotes. Adenylates L-alanine and loads it onto its peptidyl carrier domain via a thioester linkage to the phosphopanthetheine moiety. In addition, loads activated L-Ala in trans onto the second carrier domain of AmbE. Can also activate L-Ser, Gly and D-Ala, albeit to a lower extent. The condensation domain of AmbB probably condenses the activated L-Ala and the L-Glu loaded on AmbE to form a L-Glu-L-Ala dipeptide at the first carrier domain of AmbE. The protein is AMB antimetabolite synthetase AmbB of Pseudomonas aeruginosa (strain ATCC 15692 / DSM 22644 / CIP 104116 / JCM 14847 / LMG 12228 / 1C / PRS 101 / PAO1).